The chain runs to 339 residues: Dihydroorotate dehydrogenase (quinone) (339 aa).

Residues 64–68 (AGADK) and threonine 88 each bind FMN. Substrate is bound at residue lysine 68. Residue 113–117 (NRNGF) participates in substrate binding. Residues asparagine 141 and asparagine 174 each coordinate FMN. Position 174 (asparagine 174) interacts with substrate. Residue serine 177 is the Nucleophile of the active site. Asparagine 179 lines the substrate pocket. FMN is bound by residues lysine 219 and threonine 247. Position 248–249 (248–249 (NT)) interacts with substrate. Residues glycine 270, glycine 299, and 320-321 (YS) contribute to the FMN site.

Belongs to the dihydroorotate dehydrogenase family. Type 2 subfamily. As to quaternary structure, monomer. FMN serves as cofactor.

Its subcellular location is the cell membrane. The catalysed reaction is (S)-dihydroorotate + a quinone = orotate + a quinol. It participates in pyrimidine metabolism; UMP biosynthesis via de novo pathway; orotate from (S)-dihydroorotate (quinone route): step 1/1. Its function is as follows. Catalyzes the conversion of dihydroorotate to orotate with quinone as electron acceptor. This Haemophilus influenzae (strain PittEE) protein is Dihydroorotate dehydrogenase (quinone).